A 452-amino-acid polypeptide reads, in one-letter code: Pup--protein ligase (452 aa).

A Mg(2+)-binding site is contributed by glutamate 9. Residue arginine 53 participates in ATP binding. Tyrosine 55 serves as a coordination point for Mg(2+). Aspartate 57 (proton acceptor) is an active-site residue. Glutamate 63 is a binding site for Mg(2+). Residues threonine 66 and tryptophan 419 each coordinate ATP.

The protein belongs to the Pup ligase/Pup deamidase family. Pup-conjugating enzyme subfamily.

The catalysed reaction is ATP + [prokaryotic ubiquitin-like protein]-L-glutamate + [protein]-L-lysine = ADP + phosphate + N(6)-([prokaryotic ubiquitin-like protein]-gamma-L-glutamyl)-[protein]-L-lysine.. Its pathway is protein degradation; proteasomal Pup-dependent pathway. It participates in protein modification; protein pupylation. Catalyzes the covalent attachment of the prokaryotic ubiquitin-like protein modifier Pup to the proteasomal substrate proteins, thereby targeting them for proteasomal degradation. This tagging system is termed pupylation. The ligation reaction involves the side-chain carboxylate of the C-terminal glutamate of Pup and the side-chain amino group of a substrate lysine. The polypeptide is Pup--protein ligase (Geodermatophilus obscurus (strain ATCC 25078 / DSM 43160 / JCM 3152 / CCUG 61914 / KCC A-0152 / KCTC 9177 / NBRC 13315 / NRRL B-3577 / G-20)).